The sequence spans 957 residues: MTQTLSQLENSGAFIERHIGPDAAQQQEMLNAVGAQSLNALTGQIVPKDIQLATPPQVGAPATEYAALAELKAIASRNKRFTSYIGMGYTAVQLPPVILRNMLENPGWYTAYTPYQPEVSQGRLEALLNFQQVTLDLTGLDMASASLLDEATAAAEAMAMAKRVSKLKNANRFFVASDVHPQTLDVVRTRAETFGFEVIVDDAQKVLDHQDVFGVLLQQVGTTGEIHDYTALISELKSRKIVVSVAADIMALVLLTAPGKQGADIVFGSAQRFGVPMGYGGPHAAFFAAKDEYKRSMPGRIIGVSKDAAGNTALRMAMQTREQHIRREKANSNICTSQVLLANIASLYAVYHGPVGLKRIANRIHRLTDILAAGLQQKGLKLRHAHYFDTLCVEVADKAGVLARAEAAEINLRSDILNAVGITLDETTTRENVMQLFSVLLGDNHGLEIDTLDKDVAHDSRSIQPAMLRDDEILTHPVFNRYHSETEMMRYMHSLERKDLALNQAMIPLGSCTMKLNAAAEMIPITWPEFAELHPFCPPEQAEGYQQMIAQLADWLVKLTGYDAVCMQPNSGAQGEYAGLLAIRHYHESRNEGHRDICLIPASAHGTNPASAHMAGMQVVVVACDKNGNIDLTDLRAKAEQAGDNLSCIMVTYPSTHGVYEETIREVCEVVHQFGGQVYLDGANMNAQVGITSPGFIGADVSHLNLHKTFCIPHGGGGPGMGPIGVKAHLAPFVPGHSVVQIEGMLTRQGAVSAAPFGSASILPISWMYIRMMGAEGLKKASQVAILNANYIASRLQDAFPVLYTGRDGRVAHECILDIRPLKEETSISELDIAKRLIDYGFHAPTMSFPVAGTLMVEPTESESKVELDRFIDAMLAIRAEIDQVKAGVWPLEDNPLVNAPHIQSELVAEWAHPYSHEVAVFPAGVADKYWPTVKRLDDVYGDRNLFCSCVPISEYQ.

At Lys708 the chain carries N6-(pyridoxal phosphate)lysine.

Belongs to the GcvP family. As to quaternary structure, the glycine cleavage system is composed of four proteins: P, T, L and H. Pyridoxal 5'-phosphate is required as a cofactor.

It carries out the reaction N(6)-[(R)-lipoyl]-L-lysyl-[glycine-cleavage complex H protein] + glycine + H(+) = N(6)-[(R)-S(8)-aminomethyldihydrolipoyl]-L-lysyl-[glycine-cleavage complex H protein] + CO2. Functionally, the glycine cleavage system catalyzes the degradation of glycine. The P protein binds the alpha-amino group of glycine through its pyridoxal phosphate cofactor; CO(2) is released and the remaining methylamine moiety is then transferred to the lipoamide cofactor of the H protein. The protein is Glycine dehydrogenase (decarboxylating) of Shigella boydii serotype 4 (strain Sb227).